We begin with the raw amino-acid sequence, 296 residues long: Glycine--tRNA ligase alpha subunit (296 aa).

The protein belongs to the class-II aminoacyl-tRNA synthetase family. As to quaternary structure, tetramer of two alpha and two beta subunits.

The protein resides in the cytoplasm. The catalysed reaction is tRNA(Gly) + glycine + ATP = glycyl-tRNA(Gly) + AMP + diphosphate. This chain is Glycine--tRNA ligase alpha subunit, found in Francisella tularensis subsp. novicida (strain U112).